Consider the following 494-residue polypeptide: Cytochrome P450 2C23 (494 aa).

The residue at position 131 (Ser131) is a Phosphoserine. N6-acetyllysine occurs at positions 253 and 379. Cys439 lines the heme pocket.

Belongs to the cytochrome P450 family. Heme is required as a cofactor. In terms of tissue distribution, expressed in kidney and liver. Expressed in cortical tubules of kidney (at protein level).

Its subcellular location is the endoplasmic reticulum membrane. The protein resides in the microsome membrane. The catalysed reaction is (5Z,8Z,11Z,14Z)-eicosatetraenoate + reduced [NADPH--hemoprotein reductase] + O2 = (8R,9S)-epoxy-(5Z,11Z,14Z)-eicosatrienoate + oxidized [NADPH--hemoprotein reductase] + H2O + H(+). The enzyme catalyses (5Z,8Z,11Z,14Z)-eicosatetraenoate + reduced [NADPH--hemoprotein reductase] + O2 = (11R,12S)-epoxy-(5Z,8Z,14Z)-eicosatrienoate + oxidized [NADPH--hemoprotein reductase] + H2O + H(+). It catalyses the reaction (5Z,8Z,11Z,14Z)-eicosatetraenoate + reduced [NADPH--hemoprotein reductase] + O2 = (11S,12R)-epoxy-(5Z,8Z,14Z)-eicosatrienoate + oxidized [NADPH--hemoprotein reductase] + H2O + H(+). It carries out the reaction (5Z,8Z,11Z,14Z)-eicosatetraenoate + reduced [NADPH--hemoprotein reductase] + O2 = (14R,15S)-epoxy-(5Z,8Z,11Z)-eicosatrienoate + oxidized [NADPH--hemoprotein reductase] + H2O + H(+). The catalysed reaction is (5Z,8Z,11Z,14Z)-eicosatetraenoate + reduced [NADPH--hemoprotein reductase] + O2 = (14S,15R)-epoxy-(5Z,8Z,11Z)-eicosatrienoate + oxidized [NADPH--hemoprotein reductase] + H2O + H(+). The enzyme catalyses (5Z,8Z,11Z,14Z,17Z)-eicosapentaenoate + reduced [NADPH--hemoprotein reductase] + O2 = 8,9-epoxy-(5Z,11Z,14Z,17Z)-eicosatetraenoate + oxidized [NADPH--hemoprotein reductase] + H2O + H(+). It catalyses the reaction (5Z,8Z,11Z,14Z,17Z)-eicosapentaenoate + reduced [NADPH--hemoprotein reductase] + O2 = 11,12-epoxy-(5Z,8Z,14Z,17Z)-eicosatetraenoate + oxidized [NADPH--hemoprotein reductase] + H2O + H(+). It carries out the reaction (5Z,8Z,11Z,14Z,17Z)-eicosapentaenoate + reduced [NADPH--hemoprotein reductase] + O2 = 14,15-epoxy-(5Z,8Z,11Z,17Z)-eicosatetraenoate + oxidized [NADPH--hemoprotein reductase] + H2O + H(+). The catalysed reaction is (5Z,8Z,11Z,14Z,17Z)-eicosapentaenoate + reduced [NADPH--hemoprotein reductase] + O2 = (17R,18S)-epoxy-(5Z,8Z,11Z,14Z)-eicosatetraenoate + oxidized [NADPH--hemoprotein reductase] + H2O + H(+). The enzyme catalyses (5Z,8Z,11Z,14Z,17Z)-eicosapentaenoate + reduced [NADPH--hemoprotein reductase] + O2 = (17S,18R)-epoxy-(5Z,8Z,11Z,14Z)-eicosatetraenoate + oxidized [NADPH--hemoprotein reductase] + H2O + H(+). It catalyses the reaction 20-hydroxy-(5Z,8Z,11Z,14Z)-eicosatetraenoate + reduced [NADPH--hemoprotein reductase] + O2 = 20-hydroxy-8,9-epoxy-(5Z,11Z,14Z)-eicosatrienoate + oxidized [NADPH--hemoprotein reductase] + H2O + H(+). It participates in lipid metabolism; arachidonate metabolism. Functionally, a cytochrome P450 monooxygenase involved in polyunsaturated fatty acids (PUFAs) metabolism and signaling. Catalyzes preferentially the epoxidation of double bonds of PUFAs. Converts arachidonic acid (ARA, C20:4(n-6)) primarily to stereospecific products 8R,9S-, 11R,12S-, and 14S,15R-EET. Plays a major role in the formation of EETs and hydroxy-EETs (HEETs) in kidney. Via EETs may inhibit the epithelial sodium channels (ENaCs) in nephron segments, preventing excessive sodium absorption during high dietary salt intake. Participates in the formation of anti-inflammatory hydroxyepoxyeicosatrienoic acids (HEETs) by converting 20-hydroxyeicosatetraenoic acid (20-HETE) to 20,8,9-HEET, an activator of PPARA. Metabolizes eicosapentaenoic acid (EPA, C20:5(n-3)) to epoxyeicosatetraenoic acid (EETeTr) regioisomers, 8,9-, 11,12-, 14,15-, and 17,18-EETeTr, preferentially producing 17R,18S enantiomer. Mechanistically, uses molecular oxygen inserting one oxygen atom into a substrate, and reducing the second into a water molecule, with two electrons provided by NADPH via cytochrome P450 reductase (NADPH--hemoprotein reductase). The protein is Cytochrome P450 2C23 of Rattus norvegicus (Rat).